The chain runs to 189 residues: Large ribosomal subunit protein uL5 (189 aa).

Belongs to the universal ribosomal protein uL5 family. Part of the 50S ribosomal subunit; part of the 5S rRNA/L5/L18/L25 subcomplex. Contacts the 5S rRNA and the P site tRNA. Forms a bridge to the 30S subunit in the 70S ribosome.

In terms of biological role, this is one of the proteins that bind and probably mediate the attachment of the 5S RNA into the large ribosomal subunit, where it forms part of the central protuberance. In the 70S ribosome it contacts protein S13 of the 30S subunit (bridge B1b), connecting the 2 subunits; this bridge is implicated in subunit movement. Contacts the P site tRNA; the 5S rRNA and some of its associated proteins might help stabilize positioning of ribosome-bound tRNAs. The sequence is that of Large ribosomal subunit protein uL5 from Corynebacterium jeikeium (strain K411).